The primary structure comprises 227 residues: tRNA pseudouridine synthase B (227 aa).

Asp-42 acts as the Nucleophile in catalysis.

The protein belongs to the pseudouridine synthase TruB family. Type 1 subfamily.

The enzyme catalyses uridine(55) in tRNA = pseudouridine(55) in tRNA. Its function is as follows. Responsible for synthesis of pseudouridine from uracil-55 in the psi GC loop of transfer RNAs. The polypeptide is tRNA pseudouridine synthase B (Ureaplasma parvum serovar 3 (strain ATCC 27815 / 27 / NCTC 11736)).